We begin with the raw amino-acid sequence, 478 residues long: Ribosome biogenesis protein NOP53 (478 aa).

Positions methionine 1 to glycine 10 are enriched in gly residues. A disordered region spans residues methionine 1–leucine 51. The residue at position 2 (alanine 2) is an N-acetylalanine. Serine 29 is modified (phosphoserine). Residues arginine 35 to arginine 49 show a composition bias toward basic residues. Phosphoserine occurs at positions 93 and 305. The tract at residues lysine 148 to leucine 431 is mediates interaction with CDKN2A/isoform tumor suppressor ARF. Residues lysine 181–leucine 478 form a mediates interaction with NF2 region. The tract at residues glutamate 303–arginine 344 is disordered. A compositionally biased stretch (basic and acidic residues) spans threonine 333–arginine 342. The interval arginine 342–alanine 386 is mediates interaction with human herpesvirus 8 protein ORF16. Nucleolar localization signal stretches follow at residues alanine 347–arginine 395 and arginine 396–leucine 478.

This sequence belongs to the NOP53 family. Homooligomer. Interacts with PTEN; regulates PTEN phosphorylation and increases its stability. Interacts with RPL11; retains RPL11 into the nucleolus. Interacts with CDKN2A/isoform tumor suppressor ARF; the interaction is direct and promotes ARF nucleoplasmic relocalization and ubiquitin-mediated proteasomal degradation. Interacts with NPM1; the interaction is direct and competitive with MYC. Interacts with NF2 (via FERM domain); the interaction is direct. Interacts with p53/TP53 (via the oligomerization region); the interaction is direct and may prevent the MDM2-mediated proteasomal degradation of p53/TP53. Interacts with RIGI; may regulate RIGI through USP15-mediated 'Lys-63'-linked deubiquitination. Interacts with UBTF. In terms of assembly, (Microbial infection) Interacts with herpes simplex virus 1 early proteins ICP22 and ICP0. As to quaternary structure, (Microbial infection) Interacts with Human herpesvirus 8 protein ORF16; may sequester ORF16 in host nucleolus and reduce its antiapoptotic activity. In terms of processing, ubiquitin-mediated proteasomal degradation is regulated by c-JUN. It is associated with relocalization to the nucleoplasm and decreased homooligomerization. Post-translationally, phosphorylated upon DNA damage probably by ATM and DNA-PK; may regulate NOP53 degradation. In terms of tissue distribution, expressed at high levels in heart and pancreas, moderate levels in placenta, liver, skeletal muscle, and kidney, and low levels in brain and lung.

It localises to the nucleus. Its subcellular location is the nucleolus. The protein localises to the nucleoplasm. In terms of biological role, nucleolar protein which is involved in the integration of the 5S RNP into the ribosomal large subunit during ribosome biogenesis. In ribosome biogenesis, may also play a role in rRNA transcription. Also functions as a nucleolar sensor that regulates the activation of p53/TP53 in response to ribosome biogenesis perturbation, DNA damage and other stress conditions. DNA damage or perturbation of ribosome biogenesis disrupt the interaction between NOP53 and RPL11 allowing RPL11 transport to the nucleoplasm where it can inhibit MDM2 and allow p53/TP53 activation. It may also positively regulate the function of p53/TP53 in cell cycle arrest and apoptosis through direct interaction, preventing its MDM2-dependent ubiquitin-mediated proteasomal degradation. Originally identified as a tumor suppressor, it may also play a role in cell proliferation and apoptosis by positively regulating the stability of PTEN, thereby antagonizing the PI3K-AKT/PKB signaling pathway. May also inhibit cell proliferation and increase apoptosis through its interaction with NF2. May negatively regulate NPM1 by regulating its nucleoplasmic localization, oligomerization and ubiquitin-mediated proteasomal degradation. Thereby, may prevent NPM1 interaction with MYC and negatively regulate transcription mediated by the MYC-NPM1 complex. May also regulate cellular aerobic respiration. In the cellular response to viral infection, may play a role in the attenuation of interferon-beta through the inhibition of RIGI. This Homo sapiens (Human) protein is Ribosome biogenesis protein NOP53.